The primary structure comprises 337 residues: Transcription initiation factor IIB (337 aa).

The TFIIB-type zinc finger occupies 37–68; sequence EKAVCPECGSRNLVHDYERAELVCGDCGLVID. Zn(2+) contacts are provided by C41, C44, C60, and C63. Tandem repeats lie at residues 154-237 and 248-329.

It belongs to the TFIIB family.

Stabilizes TBP binding to an archaeal box-A promoter. Also responsible for recruiting RNA polymerase II to the pre-initiation complex (DNA-TBP-TFIIB). The protein is Transcription initiation factor IIB of Methanosarcina mazei (Methanosarcina frisia).